We begin with the raw amino-acid sequence, 432 residues long: Adenylosuccinate synthetase (432 aa).

GTP is bound by residues 12–18 and 40–42; these read GDEGKGK and GHT. Asp13 (proton acceptor) is an active-site residue. Asp13 and Gly40 together coordinate Mg(2+). Residues 13–16, 38–41, Thr132, Arg146, Gln226, Thr241, and Arg305 each bind IMP; these read DEGK and NAGH. The active-site Proton donor is the His41. Residue 301–307 coordinates substrate; it reads TVTGRKR. GTP is bound by residues Arg307, 333 to 335, and 415 to 417; these read KLD and STS.

It belongs to the adenylosuccinate synthetase family. In terms of assembly, homodimer. Mg(2+) is required as a cofactor.

It is found in the cytoplasm. It catalyses the reaction IMP + L-aspartate + GTP = N(6)-(1,2-dicarboxyethyl)-AMP + GDP + phosphate + 2 H(+). It participates in purine metabolism; AMP biosynthesis via de novo pathway; AMP from IMP: step 1/2. In terms of biological role, plays an important role in the de novo pathway of purine nucleotide biosynthesis. Catalyzes the first committed step in the biosynthesis of AMP from IMP. This is Adenylosuccinate synthetase from Sinorhizobium medicae (strain WSM419) (Ensifer medicae).